The primary structure comprises 202 residues: Na(+)-translocating NADH-quinone reductase subunit E (202 aa).

The next 6 helical transmembrane spans lie at 5–25, 35–55, 81–101, 114–134, 144–164, and 180–200; these read VSLF…FLGM, VSTA…TVPL, FLGL…LEMF, GVFL…LFMV, VVYG…LAGI, and LGIT…FGGM.

The protein belongs to the NqrDE/RnfAE family. In terms of assembly, composed of six subunits; NqrA, NqrB, NqrC, NqrD, NqrE and NqrF.

It localises to the cell inner membrane. It carries out the reaction a ubiquinone + n Na(+)(in) + NADH + H(+) = a ubiquinol + n Na(+)(out) + NAD(+). Its function is as follows. NQR complex catalyzes the reduction of ubiquinone-1 to ubiquinol by two successive reactions, coupled with the transport of Na(+) ions from the cytoplasm to the periplasm. NqrA to NqrE are probably involved in the second step, the conversion of ubisemiquinone to ubiquinol. The protein is Na(+)-translocating NADH-quinone reductase subunit E of Psychrobacter arcticus (strain DSM 17307 / VKM B-2377 / 273-4).